The following is a 131-amino-acid chain: Hydrogenase maturation factor HypA (131 aa).

Residue histidine 2 coordinates Ni(2+). Cysteine 73, cysteine 76, cysteine 105, and cysteine 108 together coordinate Zn(2+).

It belongs to the HypA/HybF family.

In terms of biological role, involved in the maturation of [NiFe] hydrogenases. Required for nickel insertion into the metal center of the hydrogenase. In Thermomicrobium roseum (strain ATCC 27502 / DSM 5159 / P-2), this protein is Hydrogenase maturation factor HypA.